The primary structure comprises 530 residues: UPF0422 protein lpl2888 (530 aa).

An N-terminal signal peptide occupies residues 1–19; that stretch reads MKFKKIILALACLSSPLYA. Residues 20 to 66 adopt a coiled-coil conformation; it reads DQDQQLKSEIQRLQHQAEDLQAQLNRLQKQLANHKSSQQKHEQQAAT. Positions 50–81 are disordered; it reads LANHKSSQQKHEQQAATKPAEPQSKPTVKSGA.

It belongs to the UPF0422 family.

This chain is UPF0422 protein lpl2888, found in Legionella pneumophila (strain Lens).